Here is a 613-residue protein sequence, read N- to C-terminus: Alkyldihydroxyacetonephosphate synthase (613 aa).

In terms of domain architecture, FAD-binding PCMH-type spans 126–307 (IDRPPDAVIL…TEAVVKIERL (182 aa)). Residues 158–164 (PFGGGTN), 228–234 (DSYAYST), 241–244 (ARGS), and 291–297 (EGAFGLV) contribute to the FAD site. Arginine 437 lines the substrate pocket. Tyrosine 498 functions as the Proton donor/acceptor in the catalytic mechanism. Residues 534–536 (HHH) are important for enzyme activity. A disordered region spans residues 572 to 593 (NPGKLLPSPPSEKETPKATQAR). The Microbody targeting signal signature appears at 611–613 (AHL).

The protein belongs to the FAD-binding oxidoreductase/transferase type 4 family. As to quaternary structure, homodimer. FAD serves as cofactor.

It localises to the peroxisome. The enzyme catalyses a long chain fatty alcohol + a 1-acylglycerone 3-phosphate = a 1-O-alkylglycerone 3-phosphate + a long-chain fatty acid + H(+). Its pathway is glycerolipid metabolism; ether lipid biosynthesis. Its function is as follows. Catalyzes the exchange of an acyl for a long-chain alkyl group and the formation of the ether bond in the biosynthesis of ether phospholipids. This Trypanosoma brucei brucei protein is Alkyldihydroxyacetonephosphate synthase.